The chain runs to 421 residues: UDP-N-acetylglucosamine 1-carboxyvinyltransferase (421 aa).

22–23 (KN) contacts phosphoenolpyruvate. Position 91 (arginine 91) interacts with UDP-N-acetyl-alpha-D-glucosamine. The active-site Proton donor is cysteine 115. Residue cysteine 115 is modified to 2-(S-cysteinyl)pyruvic acid O-phosphothioketal. UDP-N-acetyl-alpha-D-glucosamine-binding positions include 120–124 (RPVDL), 160–163 (KVSV), aspartate 305, and isoleucine 327.

It belongs to the EPSP synthase family. MurA subfamily.

The protein localises to the cytoplasm. It catalyses the reaction phosphoenolpyruvate + UDP-N-acetyl-alpha-D-glucosamine = UDP-N-acetyl-3-O-(1-carboxyvinyl)-alpha-D-glucosamine + phosphate. It functions in the pathway cell wall biogenesis; peptidoglycan biosynthesis. In terms of biological role, cell wall formation. Adds enolpyruvyl to UDP-N-acetylglucosamine. The chain is UDP-N-acetylglucosamine 1-carboxyvinyltransferase from Photorhabdus laumondii subsp. laumondii (strain DSM 15139 / CIP 105565 / TT01) (Photorhabdus luminescens subsp. laumondii).